The primary structure comprises 630 residues: MPFHNPFIKDGQIKFPDGSSIVAHVERWAKVRGDKLAYRFLDFSTERDGVPRDLTWAQFSARNRAVAARLQQVTQPGDRVAILCPQNLDYLVAFFGALYAGRIAVPLFDPSEPGHVGRLHAVLDNCHPSAILTTTEAAEGVRKFFRTRPANQRPRVIAVDAVPDDVASTWVNPDEPDETTIAYLQYTSGSTRIPTGVQITHLNLATNVVQVIEALEGEEGDRGLSWLPFFHDMGLITALLAPMIGHYFTFMTPAAFVRRPERWIRELARKEGDTGGTISVAPNFAFDHAAARGVPKPGSPPLDLSNVKAVLNGSEPISAATVRRFNEAFGPFGFPPKAIKPSYGLAEATLFVSTTPSAEEPKIITVDRDQLNSGRIVEVDADSPKAVAQASAGKVGIAEWAVIVDAESATELPDGQVGEIWISGQNMGTGYWGKPEESVATFQNILKSRTNPSHAEGATDDATWVRTGDYGAFYDGDLYITGRVKDLVIIDGRNHYPQDLEYSAQEASKAIRTGYVAAFSVPANQLPDEVFENAHSGIKRDPDDTSEQLVIVAERAPGAHKLDIGPITDDIRAAIAVRHGVTVRDVLLTAAGAIPRTSSGKIGRRACRAAYLDGSLRAGKVANDFPDATD.

Residues 187-192, S342, A346, D469, and R483 each bind ATP; that span reads TSGSTR.

This sequence belongs to the ATP-dependent AMP-binding enzyme family. In terms of assembly, monomer.

The catalysed reaction is a long-chain fatty acid + holo-[ACP] + ATP = a long-chain fatty acyl-[ACP] + AMP + diphosphate. It carries out the reaction decanoate + ATP + H(+) = decanoyl-AMP + diphosphate. The enzyme catalyses dodecanoate + ATP + H(+) = dodecanoyl-AMP + diphosphate. It catalyses the reaction tetradecanoate + ATP + H(+) = tetradecanoyl-AMP + diphosphate. Its pathway is lipid metabolism; mycolic acid biosynthesis. Its activity is regulated as follows. The acyl-AMP ligase activity is inhibited by the alkylphosphate ester of AMP, adenosine 50-dodecylphosphate (AMPC12). Also inhibited by eicosyl-AMP (AMPC20). Its function is as follows. Involved in the biosynthesis of mycolic acids. Catalyzes the activation of long-chain fatty acids as acyl-adenylates (acyl-AMP), which are then transferred to the phosphopantetheine arm of the polyketide synthase Pks13 for further chain extension. Can use decanoate (C10), dodecanoate (C12) and tetradecanoate (C14). In Mycolicibacterium smegmatis (strain ATCC 700084 / mc(2)155) (Mycobacterium smegmatis), this protein is Long-chain-fatty-acid--AMP ligase FadD32.